The primary structure comprises 227 residues: Orotidine 5'-phosphate decarboxylase (227 aa).

Substrate-binding positions include aspartate 8, lysine 30, 59–68, threonine 118, arginine 178, glutamine 187, glycine 207, and arginine 208; that span reads DLKLYDIPYT. Residue lysine 61 is the Proton donor of the active site.

This sequence belongs to the OMP decarboxylase family. Type 1 subfamily. As to quaternary structure, homodimer.

The catalysed reaction is orotidine 5'-phosphate + H(+) = UMP + CO2. It functions in the pathway pyrimidine metabolism; UMP biosynthesis via de novo pathway; UMP from orotate: step 2/2. Its function is as follows. Catalyzes the decarboxylation of orotidine 5'-monophosphate (OMP) to uridine 5'-monophosphate (UMP). This chain is Orotidine 5'-phosphate decarboxylase, found in Helicobacter pylori (strain Shi470).